Consider the following 1035-residue polypeptide: POM121-like protein 2 (1035 aa).

6 disordered regions span residues 1–37, 177–213, 286–343, 415–508, 754–791, and 972–1035; these read MGSF…PLHQ, LFPE…PRPG, IKKE…LGYA, LGPL…QSTL, SPLG…QPAL, and NTPV…AYKK. Residues 27-37 show a composition bias toward basic residues; that stretch reads TKRRPPQPLHQ. The span at 309 to 319 shows a compositional bias: low complexity; that stretch reads GGSESSGQQNQ. 3 stretches are compositionally biased toward polar residues: residues 320–330, 420–431, and 445–462; these read KIPQLPSSPEN, SPQSTGEATSVA, and GCSQ…SKPT. Positions 464–481 are enriched in low complexity; it reads TFILLTPTSPTLPVTDTT. The segment covering 493–502 has biased composition (pro residues); sequence PMPPDPPAPP. Residues 1000-1016 show a composition bias toward low complexity; it reads RGPFRSSASSFSIGAKS. The segment covering 1017–1035 has biased composition (basic residues); sequence KTPKNREKGHSRRHHAYKK.

This sequence belongs to the POM121 family.

The sequence is that of POM121-like protein 2 (POM121L2) from Homo sapiens (Human).